The primary structure comprises 382 residues: Galactokinase (382 aa).

34-37 (EHTD) is a binding site for substrate. 124-130 (GAGLSSS) contributes to the ATP binding site. Mg(2+) contacts are provided by S130 and E162. The active-site Proton acceptor is the D174. Position 223 (Y223) interacts with substrate.

It belongs to the GHMP kinase family. GalK subfamily.

The protein resides in the cytoplasm. The enzyme catalyses alpha-D-galactose + ATP = alpha-D-galactose 1-phosphate + ADP + H(+). It functions in the pathway carbohydrate metabolism; galactose metabolism. Its function is as follows. Catalyzes the transfer of the gamma-phosphate of ATP to D-galactose to form alpha-D-galactose-1-phosphate (Gal-1-P). The polypeptide is Galactokinase (Citrobacter koseri (strain ATCC BAA-895 / CDC 4225-83 / SGSC4696)).